We begin with the raw amino-acid sequence, 311 residues long: tRNA dimethylallyltransferase (311 aa).

An ATP-binding site is contributed by 8 to 15; the sequence is GPTGVGKS. 10 to 15 provides a ligand contact to substrate; sequence TGVGKS.

Belongs to the IPP transferase family. As to quaternary structure, monomer. The cofactor is Mg(2+).

It carries out the reaction adenosine(37) in tRNA + dimethylallyl diphosphate = N(6)-dimethylallyladenosine(37) in tRNA + diphosphate. Functionally, catalyzes the transfer of a dimethylallyl group onto the adenine at position 37 in tRNAs that read codons beginning with uridine, leading to the formation of N6-(dimethylallyl)adenosine (i(6)A). In Mycobacterium leprae (strain Br4923), this protein is tRNA dimethylallyltransferase.